The primary structure comprises 62 residues: Statherin (62 aa).

The N-terminal stretch at 1–19 (MKFLVFAFILALMVSMIGA) is a signal peptide. A hydroxyapatite-binding; inhibits crystal growth region spans residues 20–25 (DSSEEK). Residues Ser-21 and Ser-22 each carry the phosphoserine modification. The isoglutamyl lysine isopeptide (Lys-Gln); in form cyclo-statherin Q-37 cross-link spans 25–56 (KFLRRIGRFGYGYGPYQPVPEQPLYPQPYQPQ). Residues 25–58 (KFLRRIGRFGYGYGPYQPVPEQPLYPQPYQPQYQ) constitute a cross-link (isoglutamyl lysine isopeptide (Lys-Gln); in form cyclo-statherin Q-39). The segment at 38 to 62 (GPYQPVPEQPLYPQPYQPQYQQYTF) is hydrophobic; inhibits precipitation of calcium phosphate salts.

Belongs to the histatin/statherin family. Substrate for transglutaminase-2. More than 95% of the cyclized peptide is cyclo-statherin Q-37, and less than 5% is cyclo-statherin Q-39. Cyclized forms account for about 1% of total statherin in saliva. In terms of processing, sulfated on tyrosine residues. In terms of tissue distribution, secreted by parotid and submandibular glands.

The protein resides in the secreted. Its function is as follows. Salivary protein that stabilizes saliva supersaturated with calcium salts by inhibiting the precipitation of calcium phosphate salts. It also modulates hydroxyapatite crystal formation on the tooth surface. The sequence is that of Statherin (STATH) from Homo sapiens (Human).